The sequence spans 1077 residues: ATP-dependent helicase/deoxyribonuclease subunit B (1077 aa).

This sequence belongs to the helicase family. AddB/RexB type 2 subfamily. Heterodimer of AddA and RexB. It depends on Mg(2+) as a cofactor.

Its function is as follows. The heterodimer acts as both an ATP-dependent DNA helicase and an ATP-dependent, dual-direction single-stranded exonuclease. Recognizes the chi site generating a DNA molecule suitable for the initiation of homologous recombination. This subunit has 5' -&gt; 3' nuclease activity but not helicase activity. The polypeptide is ATP-dependent helicase/deoxyribonuclease subunit B (Streptococcus agalactiae serotype Ia (strain ATCC 27591 / A909 / CDC SS700)).